A 417-amino-acid polypeptide reads, in one-letter code: Multifunctional CCA protein (417 aa).

G8 and R11 together coordinate ATP. 2 residues coordinate CTP: G8 and R11. Residues D21 and D23 each contribute to the Mg(2+) site. The ATP site is built by R91, R137, and R140. CTP contacts are provided by R91, R137, and R140. In terms of domain architecture, HD spans 225-326 (SGIHTLMTLQ…LNVLKKTDAF (102 aa)).

This sequence belongs to the tRNA nucleotidyltransferase/poly(A) polymerase family. Bacterial CCA-adding enzyme type 1 subfamily. Monomer. Can also form homodimers and oligomers. Mg(2+) serves as cofactor. Ni(2+) is required as a cofactor.

The enzyme catalyses a tRNA precursor + 2 CTP + ATP = a tRNA with a 3' CCA end + 3 diphosphate. The catalysed reaction is a tRNA with a 3' CCA end + 2 CTP + ATP = a tRNA with a 3' CCACCA end + 3 diphosphate. Functionally, catalyzes the addition and repair of the essential 3'-terminal CCA sequence in tRNAs without using a nucleic acid template. Adds these three nucleotides in the order of C, C, and A to the tRNA nucleotide-73, using CTP and ATP as substrates and producing inorganic pyrophosphate. tRNA 3'-terminal CCA addition is required both for tRNA processing and repair. Also involved in tRNA surveillance by mediating tandem CCA addition to generate a CCACCA at the 3' terminus of unstable tRNAs. While stable tRNAs receive only 3'-terminal CCA, unstable tRNAs are marked with CCACCA and rapidly degraded. This Neisseria meningitidis serogroup A / serotype 4A (strain DSM 15465 / Z2491) protein is Multifunctional CCA protein.